The primary structure comprises 398 residues: Lysophosphatidylserine lipase ABHD12 (398 aa).

Positions M1–C15 are enriched in basic and acidic residues. A disordered region spans residues M1–G24. Residues M1–K74 are Cytoplasmic-facing. The chain crosses the membrane as a helical span at residues I75–G95. Residues I96–H398 lie on the Extracellular side of the membrane. N-linked (GlcNAc...) asparagine glycosylation occurs at N123. S246 (nucleophile) is an active-site residue. Active-site charge relay system residues include D333 and H372.

It belongs to the serine esterase family. In terms of processing, glycosylated.

It localises to the endoplasmic reticulum membrane. The protein resides in the mitochondrion. The catalysed reaction is 1-(9Z-octadecenoyl)-sn-glycero-3-phospho-L-serine + H2O = sn-glycero-3-phospho-L-serine + (9Z)-octadecenoate + H(+). It catalyses the reaction 1-(9Z-octadecenoyl)-sn-glycero-3-phospho-(1'-sn-glycerol) + H2O = sn-glycero-3-phospho-(1'-sn-glycerol) + (9Z)-octadecenoate + H(+). The enzyme catalyses 1-(9Z-octadecenoyl)-sn-glycero-3-phospho-(1D-myo-inositol) + H2O = sn-glycero-3-phospho-1D-myo-inositol + (9Z)-octadecenoate + H(+). It carries out the reaction 1-(9Z-octadecenoyl)-sn-glycero-3-phosphoethanolamine + H2O = sn-glycero-3-phosphoethanolamine + (9Z)-octadecenoate + H(+). The catalysed reaction is 1-(9Z-octadecenoyl)-sn-glycero-3-phosphocholine + H2O = 1-(9Z-octadecenoyl)-sn-glycerol + phosphocholine + H(+). It catalyses the reaction 2-(9Z-octadecenoyl)-glycerol + H2O = glycerol + (9Z)-octadecenoate + H(+). The enzyme catalyses 1-hexadecanoyl-sn-glycero-3-phospho-L-serine + H2O = sn-glycero-3-phospho-L-serine + hexadecanoate + H(+). It carries out the reaction 2-(5Z,8Z,11Z,14Z-eicosatetraenoyl)-glycerol + H2O = glycerol + (5Z,8Z,11Z,14Z)-eicosatetraenoate + H(+). The catalysed reaction is Hydrolyzes glycerol monoesters of long-chain fatty acids.. It catalyses the reaction 1-decanoylglycerol + H2O = decanoate + glycerol + H(+). The enzyme catalyses 1-dodecanoylglycerol + H2O = dodecanoate + glycerol + H(+). It carries out the reaction 1-tetradecanoylglycerol + H2O = tetradecanoate + glycerol + H(+). The catalysed reaction is 2-hexadecanoylglycerol + H2O = glycerol + hexadecanoate + H(+). It catalyses the reaction 1-(9Z-octadecenoyl)-glycerol + H2O = glycerol + (9Z)-octadecenoate + H(+). The enzyme catalyses 2-(9Z,12Z-octadecadienoyl)-glycerol + H2O = (9Z,12Z)-octadecadienoate + glycerol + H(+). It carries out the reaction 1-(5Z,8Z,11Z,14Z-eicosatetraenoyl)-glycerol + H2O = glycerol + (5Z,8Z,11Z,14Z)-eicosatetraenoate + H(+). The catalysed reaction is 1-(9Z,12Z-octadecadienoyl)-glycerol + H2O = (9Z,12Z)-octadecadienoate + glycerol + H(+). It catalyses the reaction 1-hexadecanoylglycerol + H2O = glycerol + hexadecanoate + H(+). The enzyme catalyses 1-octadecanoylglycerol + H2O = octadecanoate + glycerol + H(+). It carries out the reaction 1-octadecanoyl-2-(9,10-epoxyoctadecanoyl)-sn-glycero-3-phospho-L-serine + H2O = 9,10-epoxyoctadecanoate + 1-octadecanoyl-sn-glycero-3-phosphoserine + H(+). The catalysed reaction is 1-octadecanoyl-2-(10-hydroxyoctadecanoyl)-sn-glycero-3-phospho-L-serine + H2O = 1-octadecanoyl-sn-glycero-3-phosphoserine + 10-hydroxyoctadecanoate + H(+). It catalyses the reaction 1-hexadecanoyl-2-(10-hydroxyoctadecanoyl)-sn-glycero-3-phospho-L-serine + H2O = 10-hydroxyoctadecanoate + 1-hexadecanoyl-sn-glycero-3-phospho-L-serine + H(+). Selectively inhibited by DO264 (N-3-pyridyl-N'-(1-[3-chloro-4-{2-chloro-4-(trifluoromethoxy)phenoxy}pyridine-2-yl]piperidin-4-yl)thiourea). Its function is as follows. Lysophosphatidylserine (LPS) lipase that mediates the hydrolysis of lysophosphatidylserine, a class of signaling lipids that regulates immunological and neurological processes. Represents a major lysophosphatidylserine lipase in the brain, thereby playing a key role in the central nervous system. Also able to hydrolyze oxidized phosphatidylserine; oxidized phosphatidylserine is produced in response to severe inflammatory stress and constitutes a proapoptotic 'eat me' signal. Also has monoacylglycerol (MAG) lipase activity: hydrolyzes 2-arachidonoylglycerol (2-AG), thereby acting as a regulator of endocannabinoid signaling pathways. Has a strong preference for very-long-chain lipid substrates; substrate specificity is likely due to improved catalysis and not improved substrate binding. The sequence is that of Lysophosphatidylserine lipase ABHD12 from Mus musculus (Mouse).